A 331-amino-acid chain; its full sequence is 6-phosphogluconolactonase (331 aa).

The protein belongs to the cycloisomerase 2 family.

The catalysed reaction is 6-phospho-D-glucono-1,5-lactone + H2O = 6-phospho-D-gluconate + H(+). It participates in carbohydrate degradation; pentose phosphate pathway; D-ribulose 5-phosphate from D-glucose 6-phosphate (oxidative stage): step 2/3. In terms of biological role, catalyzes the hydrolysis of 6-phosphogluconolactone to 6-phosphogluconate. This chain is 6-phosphogluconolactonase, found in Salmonella typhi.